The following is a 312-amino-acid chain: Ribose-phosphate pyrophosphokinase (312 aa).

Residues 34 to 36 (DGE) and 93 to 94 (RQ) each bind ATP. Mg(2+)-binding residues include His128 and Asp167. Lys191 is a catalytic residue. The D-ribose 5-phosphate site is built by Arg193 and Asp217.

Belongs to the ribose-phosphate pyrophosphokinase family. Class I subfamily. Homohexamer. Requires Mg(2+) as cofactor.

Its subcellular location is the cytoplasm. The enzyme catalyses D-ribose 5-phosphate + ATP = 5-phospho-alpha-D-ribose 1-diphosphate + AMP + H(+). It functions in the pathway metabolic intermediate biosynthesis; 5-phospho-alpha-D-ribose 1-diphosphate biosynthesis; 5-phospho-alpha-D-ribose 1-diphosphate from D-ribose 5-phosphate (route I): step 1/1. Involved in the biosynthesis of the central metabolite phospho-alpha-D-ribosyl-1-pyrophosphate (PRPP) via the transfer of pyrophosphoryl group from ATP to 1-hydroxyl of ribose-5-phosphate (Rib-5-P). This is Ribose-phosphate pyrophosphokinase from Baumannia cicadellinicola subsp. Homalodisca coagulata.